Consider the following 91-residue polypeptide: Large ribosomal subunit protein eL31 (91 aa).

This sequence belongs to the eukaryotic ribosomal protein eL31 family.

The polypeptide is Large ribosomal subunit protein eL31 (Pyrobaculum neutrophilum (strain DSM 2338 / JCM 9278 / NBRC 100436 / V24Sta) (Thermoproteus neutrophilus)).